An 833-amino-acid polypeptide reads, in one-letter code: G-type lectin S-receptor-like serine/threonine-protein kinase RKS1 (833 aa).

The first 18 residues, 1-18 (MKVVFVIFFFFLFQFCIS), serve as a signal peptide directing secretion. The Bulb-type lectin domain occupies 19-144 (VDTIMRRQSL…VTGRSFWESF (126 aa)). At 19 to 440 (VDTIMRRQSL…NGLSGKRRVL (422 aa)) the chain is on the extracellular side. Asn-79, Asn-92, Asn-100, Asn-109, Asn-228, and Asn-256 each carry an N-linked (GlcNAc...) asparagine glycan. Positions 280-330 (PKEQCDNYAHCGPNGYCDSPSSKTFECTCLPGFEPKFPRHWFLRDSSGGCT) constitute an EGF-like domain. Cystine bridges form between Cys-284–Cys-296, Cys-290–Cys-306, and Cys-308–Cys-329. One can recognise a PAN domain in the interval 338 to 421 (CSEKDGFVKL…SGQDFYIRVD (84 aa)). Asn-363 and Asn-376 each carry an N-linked (GlcNAc...) asparagine glycan. Disulfide bonds link Cys-369/Cys-396 and Cys-373/Cys-379. The chain crosses the membrane as a helical span at residues 441–461 (LILISLIAAVMLLTVILFCVV). Topologically, residues 462-833 (RERRKSNRHR…DVTFSDIQGR (372 aa)) are cytoplasmic. The Protein kinase domain occupies 515 to 800 (FSSQNKLGAG…NLPNPKHPAF (286 aa)). Residues 521–529 (LGAGGFGPV) and Lys-543 contribute to the ATP site. A phosphoserine mark is found at Ser-549 and Ser-564. The tract at residues 604–621 (EQRAELDWPKRMEIVRGI) is caM-binding. The Proton acceptor role is filled by Asp-640. Phosphoserine occurs at positions 644 and 657. Thr-674 is modified (phosphothreonine). Ser-717 and Ser-821 each carry phosphoserine.

It belongs to the protein kinase superfamily. Ser/Thr protein kinase family.

It localises to the cell membrane. The catalysed reaction is L-seryl-[protein] + ATP = O-phospho-L-seryl-[protein] + ADP + H(+). It catalyses the reaction L-threonyl-[protein] + ATP = O-phospho-L-threonyl-[protein] + ADP + H(+). The polypeptide is G-type lectin S-receptor-like serine/threonine-protein kinase RKS1 (RKS1) (Arabidopsis thaliana (Mouse-ear cress)).